The primary structure comprises 299 residues: Small ribosomal subunit biogenesis GTPase RsgA (299 aa).

Positions 73–232 (CSWLTRPQVA…VADTPGFNRP (160 aa)) constitute a CP-type G domain. GTP-binding positions include 122–125 (TKGD) and 174–182 (GPSGVGKSS). Residues Cys257, Cys262, His264, and Cys270 each coordinate Zn(2+).

Belongs to the TRAFAC class YlqF/YawG GTPase family. RsgA subfamily. Monomer. Associates with 30S ribosomal subunit, binds 16S rRNA. Requires Zn(2+) as cofactor.

The protein resides in the cytoplasm. In terms of biological role, one of several proteins that assist in the late maturation steps of the functional core of the 30S ribosomal subunit. Helps release RbfA from mature subunits. May play a role in the assembly of ribosomal proteins into the subunit. Circularly permuted GTPase that catalyzes slow GTP hydrolysis, GTPase activity is stimulated by the 30S ribosomal subunit. The polypeptide is Small ribosomal subunit biogenesis GTPase RsgA (Parasynechococcus marenigrum (strain WH8102)).